Reading from the N-terminus, the 1126-residue chain is Translation initiation factor IF-2 (1126 aa).

Residues 63-519 (LSINKPSIKK…TTRQRQKRRA (457 aa)) form a disordered region. Basic and acidic residues predominate over residues 70–83 (IKKDNFKQNKEDKS). The segment covering 93–111 (PLKNNSNKKPLLIKPLNKP) has biased composition (low complexity). Over residues 116 to 151 (KISNQLQNPNKPNIVNSSQSRANLTNTNSKPSQNFN) the composition is skewed to polar residues. A compositionally biased stretch (pro residues) spans 161–171 (TPPPIKSPAKP). Positions 181 to 195 (NINNNVKSSESSQNI) are enriched in polar residues. 2 stretches are compositionally biased toward low complexity: residues 211-224 (NTNK…NNRK) and 240-252 (IINP…NKQN). Polar residues predominate over residues 254 to 264 (AFKQTASNRPG). 2 stretches are compositionally biased toward low complexity: residues 291 to 315 (NRQG…GLRN) and 327 to 349 (NRQG…NRPG). Residues 429–443 (GKTDWDDSAKLEALR) are compositionally biased toward basic and acidic residues. Residues 501 to 517 (KQFKKKKKETTRQRQKR) show a composition bias toward basic residues. In terms of domain architecture, tr-type G spans 618-790 (RRPPVITVMG…ILLVSDVEDL (173 aa)). Residues 627–634 (GHVDHGKT) form a G1 region. Residue 627 to 634 (GHVDHGKT) participates in GTP binding. The segment at 652–656 (GITQH) is G2. Residues 677-680 (DTPG) form a G3 region. Residues 677–681 (DTPGH) and 731–734 (NKID) each bind GTP. Residues 731–734 (NKID) form a G4 region. The segment at 767 to 769 (SAI) is G5.

Belongs to the TRAFAC class translation factor GTPase superfamily. Classic translation factor GTPase family. IF-2 subfamily.

It localises to the cytoplasm. In terms of biological role, one of the essential components for the initiation of protein synthesis. Protects formylmethionyl-tRNA from spontaneous hydrolysis and promotes its binding to the 30S ribosomal subunits. Also involved in the hydrolysis of GTP during the formation of the 70S ribosomal complex. In Prochlorococcus marinus (strain AS9601), this protein is Translation initiation factor IF-2.